The primary structure comprises 480 residues: Alpha-glucosidase (480 aa).

Val-4 to Asn-70 provides a ligand contact to NAD(+). Substrate contacts are provided by Asp-119 and Asn-153. Cys-174 lines the Mn(2+) pocket. His-175 serves as the catalytic Proton donor. His-203 is a binding site for Mn(2+). The Proton acceptor role is filled by Asp-260.

The protein belongs to the glycosyl hydrolase 4 family. As to quaternary structure, homodimer. Requires NAD(+) as cofactor. Mn(2+) serves as cofactor. The cofactor is Co(2+). It depends on Ni(2+) as a cofactor.

The catalysed reaction is Hydrolysis of terminal, non-reducing (1-&gt;4)-linked alpha-D-glucose residues with release of alpha-D-glucose.. Its activity is regulated as follows. Inhibited by Hg(2+) ion and EDTA. Alpha-glycosidase with a very broad specificity. Hydrolyzes maltose and other small maltooligosaccharides but is inactive against the polymeric substrate starch. AglA is not specific with respect to the configuration at the C-4 position of its substrates because glycosidic derivatives of D-galactose are also hydrolyzed. Does not cleave beta-glycosidic bonds. In Thermotoga maritima (strain ATCC 43589 / DSM 3109 / JCM 10099 / NBRC 100826 / MSB8), this protein is Alpha-glucosidase (aglA).